The following is a 573-amino-acid chain: 2-succinyl-5-enolpyruvyl-6-hydroxy-3-cyclohexene-1-carboxylate synthase (573 aa).

It belongs to the TPP enzyme family. MenD subfamily. As to quaternary structure, homodimer. The cofactor is Mg(2+). Requires Mn(2+) as cofactor. It depends on thiamine diphosphate as a cofactor.

It catalyses the reaction isochorismate + 2-oxoglutarate + H(+) = 5-enolpyruvoyl-6-hydroxy-2-succinyl-cyclohex-3-ene-1-carboxylate + CO2. The protein operates within quinol/quinone metabolism; 1,4-dihydroxy-2-naphthoate biosynthesis; 1,4-dihydroxy-2-naphthoate from chorismate: step 2/7. It functions in the pathway quinol/quinone metabolism; menaquinone biosynthesis. Its function is as follows. Catalyzes the thiamine diphosphate-dependent decarboxylation of 2-oxoglutarate and the subsequent addition of the resulting succinic semialdehyde-thiamine pyrophosphate anion to isochorismate to yield 2-succinyl-5-enolpyruvyl-6-hydroxy-3-cyclohexene-1-carboxylate (SEPHCHC). The protein is 2-succinyl-5-enolpyruvyl-6-hydroxy-3-cyclohexene-1-carboxylate synthase of Shewanella baltica (strain OS195).